Reading from the N-terminus, the 124-residue chain is Small ribosomal subunit protein uS12 (124 aa).

Positions 1–24 (MPTINQLVRQGRKKSVKKTNTPAL) are disordered. Aspartate 89 is modified (3-methylthioaspartic acid).

This sequence belongs to the universal ribosomal protein uS12 family. Part of the 30S ribosomal subunit. Contacts proteins S8 and S17. May interact with IF1 in the 30S initiation complex.

Its function is as follows. With S4 and S5 plays an important role in translational accuracy. Functionally, interacts with and stabilizes bases of the 16S rRNA that are involved in tRNA selection in the A site and with the mRNA backbone. Located at the interface of the 30S and 50S subunits, it traverses the body of the 30S subunit contacting proteins on the other side and probably holding the rRNA structure together. The combined cluster of proteins S8, S12 and S17 appears to hold together the shoulder and platform of the 30S subunit. This Desulfotalea psychrophila (strain LSv54 / DSM 12343) protein is Small ribosomal subunit protein uS12.